The primary structure comprises 154 residues: Anaerobic ribonucleoside-triphosphate reductase-activating protein (154 aa).

3 residues coordinate [4Fe-4S] cluster: Cys26, Cys30, and Cys33. S-adenosyl-L-methionine contacts are provided by residues 32 to 34 and Gly74; that span reads GCY.

The protein belongs to the organic radical-activating enzymes family. In terms of assembly, forms a tetramer composed of two NrdD and two NrdG subunits. [4Fe-4S] cluster serves as cofactor.

Its subcellular location is the cytoplasm. It catalyses the reaction glycyl-[protein] + reduced [flavodoxin] + S-adenosyl-L-methionine = glycin-2-yl radical-[protein] + semiquinone [flavodoxin] + 5'-deoxyadenosine + L-methionine + H(+). Its function is as follows. Activation of anaerobic ribonucleoside-triphosphate reductase under anaerobic conditions by generation of an organic free radical, using S-adenosylmethionine and reduced flavodoxin as cosubstrates to produce 5'-deoxy-adenosine. This is Anaerobic ribonucleoside-triphosphate reductase-activating protein (nrdG) from Salmonella typhi.